Consider the following 606-residue polypeptide: Pyruvate decarboxylase 2 (606 aa).

Substrate-binding residues include Asp-68 and His-155. The tract at residues 433–515 is thiamine pyrophosphate binding; sequence DSWFNCQKLK…FLINNGGYTI (83 aa). Mg(2+)-binding residues include Asp-483, Asn-510, and Gly-512. A substrate-binding site is contributed by Glu-516.

The protein belongs to the TPP enzyme family. As to quaternary structure, homotetramer. The cofactor is a metal cation. It depends on thiamine diphosphate as a cofactor.

The enzyme catalyses a 2-oxocarboxylate + H(+) = an aldehyde + CO2. The sequence is that of Pyruvate decarboxylase 2 (PDC2) from Oryza sativa subsp. indica (Rice).